The primary structure comprises 432 residues: Glutamate-gated chloride channel subunit beta (432 aa).

The N-terminal stretch at 1-18 (MSQYMMVAVAAVVAVAGS) is a signal peptide. The Extracellular segment spans residues 19-249 (SQISRRSTGG…MQLTLKRQFS (231 aa)). A glycan (N-linked (GlcNAc...) asparagine) is linked at asparagine 52. L-glutamate-binding residues include arginine 69, arginine 88, and serine 155. Cysteines 164 and 178 form a disulfide. Serine 184 is a binding site for L-glutamate. N-linked (GlcNAc...) asparagine glycosylation occurs at asparagine 219. The cysteines at positions 226 and 237 are disulfide-linked. Residues 250 to 272 (YYLVQLYGPTTMIVIVSWVSFWI) traverse the membrane as a helical segment. Over 273-277 (DMHST) the chain is Cytoplasmic. The chain crosses the membrane as a helical span at residues 278–299 (AGRVALGVTTLLTMTTMQAAIN). Residues 300–306 (AKLPPVS) lie on the Extracellular side of the membrane. The chain crosses the membrane as a helical span at residues 307–327 (YVKVVDVWLGACQTFVFGALL). Over 328 to 402 (EYAFVSYQDS…KPDYLPAKID (75 aa)) the chain is Cytoplasmic. The chain crosses the membrane as a helical span at residues 403–426 (YYARFCVPLGFLAFNAIYWTSCLV). Residues 427 to 432 (MVSRLV) lie on the Extracellular side of the membrane.

This sequence belongs to the ligand-gated ion channel (TC 1.A.9) family. Glutamate-gated chloride channel (TC 1.A.9.4) subfamily. As to quaternary structure, pentamer. As to expression, expressed in motor neuron commissures at the anterior portion of the worms.

The protein localises to the postsynaptic cell membrane. Its subcellular location is the cell membrane. Functionally, glutamate-gated chloride channel subunit; channel properties may be modulated by the formation of heteromeric channels. Glutamate binding triggers a rapidly reversible current, while the anti-helmintic drug ivermectin triggers a permanently open channel configuration. This chain is Glutamate-gated chloride channel subunit beta, found in Haemonchus contortus (Barber pole worm).